Here is a 92-residue protein sequence, read N- to C-terminus: Small ribosomal subunit protein uS19 (92 aa).

The protein belongs to the universal ribosomal protein uS19 family.

In terms of biological role, protein S19 forms a complex with S13 that binds strongly to the 16S ribosomal RNA. The protein is Small ribosomal subunit protein uS19 of Sinorhizobium medicae (strain WSM419) (Ensifer medicae).